The chain runs to 757 residues: RNA-directed RNA polymerase catalytic subunit (757 aa).

The interval 50-82 (SEKGKWTTNTETGAPQLNPIDGPLPEDNEPSGY) is disordered. Polar residues predominate over residues 55–64 (WTTNTETGAP). Short sequence motifs (nuclear localization signal) lie at residues 187-195 (RKRRVRDNM) and 203-216 (RTIG…NKKG). The interval 249 to 256 (RGFVYFVE) is promoter-binding site. The RdRp catalytic domain occupies 286–483 (VRKMMTNSQD…GINMSKKKSY (198 aa)).

Belongs to the influenza viruses polymerase PB1 family. Influenza RNA polymerase is composed of three subunits: PB1, PB2 and PA. Interacts (via N-terminus) with PA (via C-terminus). Interacts (via C-terminus) with PB2 (via N-terminus); this interaction is essential for transcription initiation. Post-translationally, phosphorylated by host PRKCA.

The protein localises to the host nucleus. It localises to the host cytoplasm. The catalysed reaction is RNA(n) + a ribonucleoside 5'-triphosphate = RNA(n+1) + diphosphate. Functionally, RNA-dependent RNA polymerase which is responsible for replication and transcription of virus RNA segments. The transcription of viral mRNAs occurs by a unique mechanism called cap-snatching. 5' methylated caps of cellular mRNAs are cleaved after 10-13 nucleotides by PA. In turn, these short capped RNAs are used as primers by PB1 for transcription of viral mRNAs. During virus replication, PB1 initiates RNA synthesis and copy vRNA into complementary RNA (cRNA) which in turn serves as a template for the production of more vRNAs. The sequence is that of RNA-directed RNA polymerase catalytic subunit from Influenza A virus (strain A/Gull/Minnesota/945/1980 H13N6).